Reading from the N-terminus, the 462-residue chain is SET domain-containing protein SmydA-8, isoform A (462 aa).

One can recognise an SET domain in the interval 55–287 (PNWTISSSTV…KGGEITTTYT (233 aa)).

It belongs to the class V-like SAM-binding methyltransferase superfamily.

This is SET domain-containing protein SmydA-8, isoform A from Drosophila melanogaster (Fruit fly).